The following is a 362-amino-acid chain: Endopolygalacturonase II (362 aa).

The first 21 residues, 1–21 (MHSFASLLAYGLVAGATFASA), serve as a signal peptide directing secretion. Residues 22–27 (SPIEAR) constitute a propeptide that is removed on maturation. Cys30 and Cys45 are joined by a disulfide. A PbH1 1 repeat occupies 156–186 (ANDITFTDVTINNADGDTQGGHNTDAFDVGN). Asp201 functions as the Proton donor in the catalytic mechanism. Cys203 and Cys219 are oxidised to a cystine. PbH1 repeat units lie at residues 209-229 (GENI…SIGS), 238-259 (VKNV…RIKT), 267-289 (VSEI…VIQQ), and 301-322 (TNGV…DSGA). The active site involves His223. Asn240 carries N-linked (GlcNAc...) (high mannose) asparagine glycosylation. 2 disulfides stabilise this stretch: Cys329/Cys334 and Cys353/Cys362.

This sequence belongs to the glycosyl hydrolase 28 family.

Its subcellular location is the secreted. The enzyme catalyses (1,4-alpha-D-galacturonosyl)n+m + H2O = (1,4-alpha-D-galacturonosyl)n + (1,4-alpha-D-galacturonosyl)m.. In terms of biological role, involved in maceration and soft-rotting of plant tissue. Hydrolyzes the 1,4-alpha glycosidic bonds of de-esterified pectate in the smooth region of the plant cell wall. The chain is Endopolygalacturonase II (pgaII) from Aspergillus niger (strain ATCC 1015 / CBS 113.46 / FGSC A1144 / LSHB Ac4 / NCTC 3858a / NRRL 328 / USDA 3528.7).